Reading from the N-terminus, the 80-residue chain is Putative membrane protein insertion efficiency factor (80 aa).

It belongs to the UPF0161 family.

It is found in the cell inner membrane. In terms of biological role, could be involved in insertion of integral membrane proteins into the membrane. The sequence is that of Putative membrane protein insertion efficiency factor from Paracoccus denitrificans (strain Pd 1222).